The following is a 143-amino-acid chain: Large ribosomal subunit protein uL11 (143 aa).

Belongs to the universal ribosomal protein uL11 family. In terms of assembly, part of the ribosomal stalk of the 50S ribosomal subunit. Interacts with L10 and the large rRNA to form the base of the stalk. L10 forms an elongated spine to which L12 dimers bind in a sequential fashion forming a multimeric L10(L12)X complex. One or more lysine residues are methylated.

Its function is as follows. Forms part of the ribosomal stalk which helps the ribosome interact with GTP-bound translation factors. The protein is Large ribosomal subunit protein uL11 of Bifidobacterium longum (strain DJO10A).